Reading from the N-terminus, the 161-residue chain is Endoribonuclease YbeY (161 aa).

Zn(2+)-binding residues include His121, His125, and His131.

The protein belongs to the endoribonuclease YbeY family. Zn(2+) is required as a cofactor.

It is found in the cytoplasm. Its function is as follows. Single strand-specific metallo-endoribonuclease involved in late-stage 70S ribosome quality control and in maturation of the 3' terminus of the 16S rRNA. The sequence is that of Endoribonuclease YbeY from Xanthomonas axonopodis pv. citri (strain 306).